The chain runs to 311 residues: Ribonuclease HIII (311 aa).

The RNase H type-2 domain occupies 95–311 (MSIVGSDEVG…NTEKAFRLLK (217 aa)). The a divalent metal cation site is built by D101, E102, and D206.

It belongs to the RNase HII family. RnhC subfamily. The cofactor is Mn(2+). Requires Mg(2+) as cofactor.

It localises to the cytoplasm. It catalyses the reaction Endonucleolytic cleavage to 5'-phosphomonoester.. Functionally, endonuclease that specifically degrades the RNA of RNA-DNA hybrids. The chain is Ribonuclease HIII from Bacillus anthracis (strain A0248).